Reading from the N-terminus, the 268-residue chain is Serine/arginine-rich splicing factor SR30 (268 aa).

RRM domains follow at residues 7 to 82 (RTIY…IAHG) and 109 to 187 (YRVL…EYES). Residues 186–199 (ESRSVSRSPDDSKS) are compositionally biased toward basic and acidic residues. Positions 186-268 (ESRSVSRSPD…NSPVSPVISG (83 aa)) are disordered. Phosphoserine occurs at positions 193, 210, 212, 214, 219, 221, 227, 236, 246, 256, and 260. Low complexity predominate over residues 207-247 (RGPSCSYSSKSRSVSPARSISPRSRPLSRSRSLYSSVSRSQ). Residues 257 to 268 (RSNSPVSPVISG) are compositionally biased toward low complexity.

This sequence belongs to the splicing factor SR family. SR subfamily. As to quaternary structure, component of the spliceosome. Interacts with SNRNP35, CYP59 and CYP63. In terms of processing, phosphorylated. As to expression, ubiquitous.

Its subcellular location is the nucleus speckle. The protein localises to the nucleus. It is found in the nucleoplasm. The protein resides in the cytoplasm. Functionally, regulatory splicing factor that modulates alternative splicing and gene expression in specific cell types. Autoregulates its own expression. Probably involved in intron recognition and spliceosome assembly. This is Serine/arginine-rich splicing factor SR30 (SR30) from Arabidopsis thaliana (Mouse-ear cress).